We begin with the raw amino-acid sequence, 163 residues long: Ubiquitin-like protein 1-ribosomal protein eS31 fusion protein (163 aa).

A Ubiquitin-like domain is found at 1–70 (MVFVKTLNRT…IYVNLELLGG (70 aa)). Residue Gly70 forms a Glycyl lysine isopeptide (Gly-Lys) (interchain with K-? in acceptor proteins) linkage. Residues 115–138 (CQQPSCGGGVFMAQHANRHYCGRC) form a C4-type zinc finger.

In the N-terminal section; belongs to the ubiquitin family. It in the C-terminal section; belongs to the eukaryotic ribosomal protein eS31 family.

This is Ubiquitin-like protein 1-ribosomal protein eS31 fusion protein (ubl-1) from Caenorhabditis briggsae.